Consider the following 620-residue polypeptide: Glutathione-regulated potassium-efflux system protein KefC (620 aa).

The next 12 helical transmembrane spans lie at H4–V24, L26–L46, A54–L74, V86–V106, V114–M134, F149–L169, A178–L198, V218–G238, L271–A291, V296–K316, R326–A346, and A359–T379. An RCK N-terminal domain is found at Q399–T518. The segment at H596–P620 is disordered.

The protein belongs to the monovalent cation:proton antiporter 2 (CPA2) transporter (TC 2.A.37) family. KefC subfamily. As to quaternary structure, homodimer. Interacts with the regulatory subunit KefF.

Its subcellular location is the cell inner membrane. Functionally, pore-forming subunit of a potassium efflux system that confers protection against electrophiles. Catalyzes K(+)/H(+) antiport. This Cronobacter sakazakii (strain ATCC BAA-894) (Enterobacter sakazakii) protein is Glutathione-regulated potassium-efflux system protein KefC.